The chain runs to 289 residues: G1/S-specific cyclin-D2 (289 aa).

A Cyclin N-terminal domain is found at V26–L151. The segment at D264–L289 is disordered. Position 271 is a phosphoserine (S271). T280 carries the post-translational modification Phosphothreonine.

The protein belongs to the cyclin family. Cyclin D subfamily. As to quaternary structure, interacts with either CDK4 or CDK6 protein kinase to form a serine/threonine kinase holoenzyme complex. The cyclin subunit imparts substrate specificity to the complex. In terms of processing, phosphorylation at Thr-280 by MAP kinases is required for ubiquitination and degradation by the DCX(AMBRA1) complex. Ubiquitinated by the DCX(AMBRA1) complex during the transition from G1 to S cell phase, leading to its degradation: ubiquitination is dependent on Thr-280 phosphorylation. The DCX(AMBRA1) complex represents the major regulator of CCND2 stability during the G1/S transition. Polyubiquitinated by the SCF(FBXL2) complex, leading to proteasomal degradation.

It localises to the nucleus. Its subcellular location is the cytoplasm. The protein localises to the nucleus membrane. In terms of biological role, regulatory component of the cyclin D2-CDK4 (DC) complex that phosphorylates and inhibits members of the retinoblastoma (RB) protein family including RB1 and regulates the cell-cycle during G(1)/S transition. Phosphorylation of RB1 allows dissociation of the transcription factor E2F from the RB/E2F complex and the subsequent transcription of E2F target genes which are responsible for the progression through the G(1) phase. Hypophosphorylates RB1 in early G(1) phase. Cyclin D-CDK4 complexes are major integrators of various mitogenenic and antimitogenic signals. This Homo sapiens (Human) protein is G1/S-specific cyclin-D2.